The sequence spans 463 residues: MTVRTRFAPSPTGYLHVGGARTALFSWAYARHFGGTFVLRIEDTDLERSTPEAVQAIIEGMEWLGLHHDEGPFYQMQRMDRYREVIGQMLAAGTAYHCYSSPEEVEAMRERQRAAGEKPRYDGTWRPEAGKTLPAIPEGRKPVVRFRNPTEGDVTWLDVVKGSITISNRELDDLVIARPDGTPTYNFCVAVDDSDMKITHVIRGDDHVNNTPRQINILQALGATLPHYGHLPMILGTDGEKLSKRHGAVSVMDYPAQGYLPEAMLNYLARLGWSHGDDEVFSMEQFTQWFDLDHLTKSPAQFNPEKLDWLNNHYIKQADNTRLAGLVRPMMEGLGAQFENAPDLAAVIALMKERVNTLNELAVAAMLFYRQPAADAALLAQHLTDAIRPALAQYVEQLKTVAWSKEALSATLKEVLAAHKLKMPQLAMPLRLLITGQLQTPSIDAVVELFGREVVLARLGKNL.

The 'HIGH' region signature appears at 9-19 (PSPTGYLHVGG). Over residues 115 to 129 (AGEKPRYDGTWRPEA) the composition is skewed to basic and acidic residues. The interval 115-136 (AGEKPRYDGTWRPEAGKTLPAI) is disordered. The 'KMSKS' region signature appears at 241–245 (KLSKR). Lys-244 is a binding site for ATP.

Belongs to the class-I aminoacyl-tRNA synthetase family. Glutamate--tRNA ligase type 1 subfamily. In terms of assembly, monomer.

It localises to the cytoplasm. The catalysed reaction is tRNA(Glu) + L-glutamate + ATP = L-glutamyl-tRNA(Glu) + AMP + diphosphate. Functionally, catalyzes the attachment of glutamate to tRNA(Glu) in a two-step reaction: glutamate is first activated by ATP to form Glu-AMP and then transferred to the acceptor end of tRNA(Glu). The chain is Glutamate--tRNA ligase from Janthinobacterium sp. (strain Marseille) (Minibacterium massiliensis).